We begin with the raw amino-acid sequence, 319 residues long: Urease accessory protein UreD (319 aa).

The disordered stretch occupies residues Gln-298–His-319.

It belongs to the UreD family. In terms of assembly, ureD, UreF and UreG form a complex that acts as a GTP-hydrolysis-dependent molecular chaperone, activating the urease apoprotein by helping to assemble the nickel containing metallocenter of UreC. The UreE protein probably delivers the nickel.

Its subcellular location is the cytoplasm. Required for maturation of urease via the functional incorporation of the urease nickel metallocenter. In Synechococcus sp. (strain WH7805), this protein is Urease accessory protein UreD.